A 202-amino-acid chain; its full sequence is Imidazole glycerol phosphate synthase subunit HisH (202 aa).

The Glutamine amidotransferase type-1 domain maps to Arg3–Cys202. The active-site Nucleophile is the Cys79. Residues His183 and Glu185 contribute to the active site.

In terms of assembly, heterodimer of HisH and HisF.

The protein localises to the cytoplasm. The enzyme catalyses 5-[(5-phospho-1-deoxy-D-ribulos-1-ylimino)methylamino]-1-(5-phospho-beta-D-ribosyl)imidazole-4-carboxamide + L-glutamine = D-erythro-1-(imidazol-4-yl)glycerol 3-phosphate + 5-amino-1-(5-phospho-beta-D-ribosyl)imidazole-4-carboxamide + L-glutamate + H(+). It catalyses the reaction L-glutamine + H2O = L-glutamate + NH4(+). The protein operates within amino-acid biosynthesis; L-histidine biosynthesis; L-histidine from 5-phospho-alpha-D-ribose 1-diphosphate: step 5/9. In terms of biological role, IGPS catalyzes the conversion of PRFAR and glutamine to IGP, AICAR and glutamate. The HisH subunit catalyzes the hydrolysis of glutamine to glutamate and ammonia as part of the synthesis of IGP and AICAR. The resulting ammonia molecule is channeled to the active site of HisF. This chain is Imidazole glycerol phosphate synthase subunit HisH, found in Methanosarcina barkeri (strain Fusaro / DSM 804).